Here is a 787-residue protein sequence, read N- to C-terminus: MNSKVLNTLEYQQVKQQLAPYLVSATGQQALNELHPMTSVADIQRALDETNDGAEVYRLKGGIPVARLADIKPHMKRLAIGATLNGSELGQVGRVLRTTRAITRFFAELLEDAPENDIRHLFDEVAELVTLPDVTKRLATAIEGDGHITDEASPELSRIRSNIRRTETEIRNQMGHYTRGHDAKYLSDPIITIRNDRYVIPVKAENRSRFGGIVHDQSASGQTLFIEPQAVMAMNDRLRQNQVAEKQEEQRILEELSNLIAPYQDEIINNAAILGHFDFINAKARYAHDMKATEPAVSPQNEVYLRQARHPLIDPRKVVANDISLGTDYQAMVITGPNTGGKTITLKTLGLLQLMAQSGLFIPVEAGSRVGVYNEIFADIGDEQSIEQNLSTFSSHMENIESFLAQIDAHSLVLVDELGAGTDPQEGAALAIAILDAIGAKGTQVVATTHYPELKAYGFNRPDTINASMEFDEETLKPTYRLLVGIPGRSNALDIAQRLGIPQAIVDQARSLTDTDSQDLNAMIADLVTKRKQVEDEQLHLKTQVADSEKLHRQLKSEFNAYQQRKDQLIEDAKVQANTIVEQSKTKADAIISDLRKKQLASGTATVKENELIDAKGALNALEQQPKLKKNRVLRRAKAQHDFHEGDDVLVKSYGQRGVLMRQMGKHEWEVQLGILKMKISDGDLERVKPEEPKRARATVQSAHASHVSPNLDLRGVRYEDAMTQVDRYIDAALLAGYPSVTIVHGKGTGALREGITNYLKSNRQVKSFHFAAPNHGGNGATEVQFK.

336–343 is an ATP binding site; that stretch reads GPNTGGKT. In terms of domain architecture, Smr spans 712 to 787; it reads LDLRGVRYED…GNGATEVQFK (76 aa).

The protein belongs to the DNA mismatch repair MutS family. MutS2 subfamily. In terms of assembly, homodimer. Binds to stalled ribosomes, contacting rRNA.

Endonuclease that is involved in the suppression of homologous recombination and thus may have a key role in the control of bacterial genetic diversity. Functionally, acts as a ribosome collision sensor, splitting the ribosome into its 2 subunits. Detects stalled/collided 70S ribosomes which it binds and splits by an ATP-hydrolysis driven conformational change. Acts upstream of the ribosome quality control system (RQC), a ribosome-associated complex that mediates the extraction of incompletely synthesized nascent chains from stalled ribosomes and their subsequent degradation. Probably generates substrates for RQC. The protein is Endonuclease MutS2 of Lactiplantibacillus plantarum (strain ATCC BAA-793 / NCIMB 8826 / WCFS1) (Lactobacillus plantarum).